The chain runs to 100 residues: ESAT-6-like protein EsxB (100 aa).

A disordered region spans residues G80–I100.

The protein belongs to the WXG100 family. CFP-10 subfamily. In terms of assembly, forms a tight 1:1 complex with EsxA. An artificial EsxA-EsxB heterodimer interacts with EspA.

Its subcellular location is the secreted. In terms of biological role, an exported protein. Plays a role in DNA conjugation, in at least a donor strain. This chain is ESAT-6-like protein EsxB, found in Mycolicibacterium smegmatis (strain ATCC 700084 / mc(2)155) (Mycobacterium smegmatis).